The chain runs to 127 residues: Vacuolar ATPase assembly integral membrane protein VMA21 (127 aa).

The segment at 1–28 (MATRRNPTKESITTSPPPDQQPRQPGEL) is disordered. Residues 1–45 (MATRRNPTKESITTSPPPDQQPRQPGELEHREAIQLRDLPGYPQQ) lie on the Cytoplasmic side of the membrane. Residues 46–66 (VLWKLIIYSIAVLVLPLSAYF) traverse the membrane as a helical segment. The Lumenal segment spans residues 67 to 79 (YSVNYVFDGNTTY). A helical membrane pass occupies residues 80-100 (AGATAAITANLILFSYIVVAM). Residues 101–127 (REDKGDQEQLREQQQLRGNKEETKKMK) lie on the Cytoplasmic side of the membrane. The disordered stretch occupies residues 107–127 (QEQLREQQQLRGNKEETKKMK). The segment covering 118–127 (GNKEETKKMK) has biased composition (basic and acidic residues). The Prevents secretion from ER motif lies at 124-127 (KKMK).

It belongs to the VMA21 family.

It is found in the endoplasmic reticulum membrane. The protein localises to the endoplasmic reticulum-Golgi intermediate compartment membrane. It localises to the cytoplasmic vesicle. The protein resides in the COPII-coated vesicle membrane. Functionally, required for the assembly of the V0 complex of the vacuolar ATPase (V-ATPase) in the endoplasmic reticulum. The sequence is that of Vacuolar ATPase assembly integral membrane protein VMA21 from Coccidioides immitis (strain RS) (Valley fever fungus).